Consider the following 434-residue polypeptide: Progestin and adipoQ receptor-like protein 1 (434 aa).

The Cytoplasmic segment spans residues 1 to 201 (MNPDEVNRAL…KSIWSLHTET (201 aa)). Disordered regions lie at residues 74–103 (LPQQ…MPKH) and 118–137 (EINL…ELEV). A helical membrane pass occupies residues 202-222 (GNIWTHLIGCVAFFFLACWFL). Topologically, residues 223 to 234 (TRPDNHIQFQEK) are extracellular. The helical transmembrane segment at 235 to 255 (VVFSFFFAGAVLCLGLSFAFH) threads the bilayer. The Cytoplasmic segment spans residues 256–273 (TLSCHSVNVVKIFCKLDY). A helical transmembrane segment spans residues 274–294 (MGISLLIIGSFIPWIYYGFYC). Residues 295–299 (RREPK) lie on the Extracellular side of the membrane. Residues 300 to 320 (ITYIAMVSVLGIGAIVVSLWD) traverse the membrane as a helical segment. The Cytoplasmic portion of the chain corresponds to 321 to 331 (KFSESRFRPIR). The chain crosses the membrane as a helical span at residues 332–352 (AAVFVGMGCSGVIPTIHYIIT). Topologically, residues 353-362 (DGVHSLFADN) are extracellular. A helical transmembrane segment spans residues 363–383 (SFHWLLLMAFLYLLGAGLYAT). At 384-403 (RTPERFFPGKCDIWFQSHQL) the chain is on the cytoplasmic side. The chain crosses the membrane as a helical span at residues 404–424 (FHTCVVIAAFVHYYGISEMAF). The Extracellular portion of the chain corresponds to 425-434 (ARLNEQCPVR).

Belongs to the ADIPOR family.

The protein localises to the membrane. Probable receptor, which may be involved in metabolic pathways that regulate lipid metabolism such as fatty acid oxidation. The chain is Progestin and adipoQ receptor-like protein 1 (paqr-1) from Caenorhabditis elegans.